Here is a 635-residue protein sequence, read N- to C-terminus: Chaperone protein DnaK (635 aa).

Position 198 is a phosphothreonine; by autocatalysis (threonine 198). A disordered region spans residues 597–635 (LYEQDQANNERHDTPETEKAEGDNVVDAEFQEIDDQDKK). Residues 604–618 (NNERHDTPETEKAEG) show a composition bias toward basic and acidic residues. Positions 620–635 (NVVDAEFQEIDDQDKK) are enriched in acidic residues.

The protein belongs to the heat shock protein 70 family.

Acts as a chaperone. In Zymomonas mobilis subsp. mobilis (strain ATCC 31821 / ZM4 / CP4), this protein is Chaperone protein DnaK.